A 143-amino-acid chain; its full sequence is Large ribosomal subunit protein uL11 (143 aa).

It belongs to the universal ribosomal protein uL11 family. As to quaternary structure, part of the ribosomal stalk of the 50S ribosomal subunit. Interacts with L10 and the large rRNA to form the base of the stalk. L10 forms an elongated spine to which L12 dimers bind in a sequential fashion forming a multimeric L10(L12)X complex. In terms of processing, one or more lysine residues are methylated.

Functionally, forms part of the ribosomal stalk which helps the ribosome interact with GTP-bound translation factors. The chain is Large ribosomal subunit protein uL11 from Rhizobium etli (strain CIAT 652).